The primary structure comprises 695 residues: MSTLDRSIQARARAHLFGLLRAGFRVIPLSDATRDRWRSWFLDRHADWVPEPVRGRANHAISRRPTARSDEAAIGHVAYRTIALPETLPATLVAFYLPQFHPIPENDAWWGKGFTEWRNVSRTLPQFEGHQQPRLPADLGFYDLRTPDVMREQARLAQEYGLGAFCFYFYWFAGKTLLEMPITQWHADTSITLPFCLCWANEKWARRWDGRGHDVLIDQAHSADDDLAFIAHVARYMRNPKYLRVGDRPLLLVYRPHLLPEPVQTAARWRNWCRDNGIGEIHLAYVQGFERPDPRDIGFDAAVEFPPNMSTPPSVTARQRLVNPDFSGDVLDWRELARDMEQRPLRDYTLYPGVNPGWDNEPRRSGKGRIYLHASPRRYRDWLARTVQHRLANAPSAHRMVFINAWNEWAEGAVLEPDARLGYAWLDATRQALTRAPDVATEICSPSACVVLHAWYLDVLDEMLDAIVECGTPLRIIITTDLTKVIEVTKCIQRRGIQAEVEGFENRGRDILPFLHVANRLLDENVQLVLKLHTKKSTHRDDGNAWRGEMLTALLGPQRVDAIVNAFSTDPLAGLAAPEDHLLPVTEFIGGNADALDYLTVRTGSDAPDTNSLFASGSMFWARLEALRPLLDAHLHASEFESEQGQIDGTLAHAIERFVGLAVTHSGHRVTTVEQTLGITKTPSAQPYRYARKAP.

This is an uncharacterized protein from Xanthomonas campestris pv. campestris (strain ATCC 33913 / DSM 3586 / NCPPB 528 / LMG 568 / P 25).